We begin with the raw amino-acid sequence, 216 residues long: Adenylate kinase (216 aa).

ATP is bound at residue 10–15 (GAGKGT). The segment at 30-59 (STGDMIRETIKSDSEIGKELKKVLDAGQLV) is NMP. Residues Thr31, Arg36, 57-59 (QLV), and Gln92 each bind AMP. An LID region spans residues 122–159 (GRRVHPASGRTYHTKFNPPKVEGKDDITGEDLITRTDD). Residues Arg123 and 132–133 (TY) contribute to the ATP site. Residues Arg156 and Arg167 each contribute to the AMP site. Gln202 serves as a coordination point for ATP.

Belongs to the adenylate kinase family. Monomer.

The protein resides in the cytoplasm. The enzyme catalyses AMP + ATP = 2 ADP. It participates in purine metabolism; AMP biosynthesis via salvage pathway; AMP from ADP: step 1/1. Functionally, catalyzes the reversible transfer of the terminal phosphate group between ATP and AMP. Plays an important role in cellular energy homeostasis and in adenine nucleotide metabolism. The protein is Adenylate kinase of Francisella philomiragia subsp. philomiragia (strain ATCC 25017 / CCUG 19701 / FSC 153 / O#319-036).